Here is a 547-residue protein sequence, read N- to C-terminus: Inositol 1,4,5-trisphosphate receptor-interacting protein (547 aa).

The N-terminal stretch at 1–15 (MAMGLFRVCLVVVTA) is a signal peptide. Residues 16–83 (IINHPLLFPR…EEGRQQNETR (68 aa)) are Extracellular-facing. N27 and N80 each carry an N-linked (GlcNAc...) asparagine glycan. A coiled-coil region spans residues 32-82 (ENEEEIIRKMQAHQEKLQLEQLRLEEEVARLAAEKEALEQVAEEGRQQNET). The chain crosses the membrane as a helical span at residues 84–100 (VAWDLWSTLCMILFLMI). Over 101-547 (EVWRQDHQEG…VPSDQPTPKS (447 aa)) the chain is Cytoplasmic. The tract at residues 109–129 (EGPSPECLGGEEDELPGLGGA) is disordered. S547 carries the phosphoserine modification.

Belongs to the ITPRIP family. In terms of assembly, interacts with ITPR. Detected in brain where it is concentrated in cerebellar Purkinje cells (at protein level).

It is found in the cell membrane. The protein resides in the nucleus outer membrane. In terms of biological role, enhances Ca(2+)-mediated inhibition of inositol 1,4,5-triphosphate receptor (ITPR) Ca(2+) release. The protein is Inositol 1,4,5-trisphosphate receptor-interacting protein (ITPRIP) of Homo sapiens (Human).